The following is a 1249-amino-acid chain: Cell adhesion molecule-related/down-regulated by oncogenes (1249 aa).

The N-terminal stretch at 1–25 (MHSDPGPWHPLLCFLVLALSTSANS) is a signal peptide. Topologically, residues 26–957 (DVTPRFTSKP…PSHSPTRNGD (932 aa)) are extracellular. 5 consecutive Ig-like C2-type domains span residues 29 to 113 (PRFT…KSVS), 120 to 212 (NDFE…LKLS), 217 to 307 (PRVD…VYYT), 314 to 400 (PSVS…ATVH), and 406 to 517 (PVIV…AYLT). 3 disulfide bridges follow: Cys-50–Cys-98, Cys-142–Cys-192, and Cys-244–Cys-292. Residues Asn-181, Asn-289, Asn-296, Asn-344, and Asn-428 are each glycosylated (N-linked (GlcNAc...) asparagine). Intrachain disulfides connect Cys-335/Cys-382 and Cys-427/Cys-501. 2 disordered regions span residues 528–585 (EDIT…SPPQ) and 671–690 (TSKERTSSSKNTQAPFPPIG). Basic and acidic residues predominate over residues 545–566 (SETRVPDHSQINEHKPEPRVTE). Fibronectin type-III domains lie at 577 to 675 (APII…SKER), 721 to 815 (APDR…VAGY), and 826 to 923 (GPRI…TKAR). Asn-870 carries N-linked (GlcNAc...) asparagine glycosylation. The segment at 929-952 (SEYPVLDLSTPSVPDRSSSPSHSP) is disordered. A compositionally biased stretch (low complexity) spans 937–952 (STPSVPDRSSSPSHSP). Residues 958–978 (FLYVIVGCVLGGMVLILLAFI) traverse the membrane as a helical segment. Residues 979-1249 (AMCLLKNRQQ…DHPQLQTQEA (271 aa)) are Cytoplasmic-facing. A disordered region spans residues 1158–1202 (NCSEEIEEDQNEKETQLSANSVCPEEATQTGTEQHEGEDCTKTED). The segment covering 1159-1168 (CSEEIEEDQN) has biased composition (acidic residues). Polar residues predominate over residues 1173–1189 (QLSANSVCPEEATQTGT). The span at 1190–1202 (EQHEGEDCTKTED) shows a compositional bias: basic and acidic residues.

Its subcellular location is the cell membrane. Component of a cell-surface receptor complex that mediates cell-cell interactions between muscle precursor cells. Promotes differentiation of myogenic cells. The polypeptide is Cell adhesion molecule-related/down-regulated by oncogenes (cdon) (Xenopus laevis (African clawed frog)).